The chain runs to 406 residues: MLNISKIFEEVKVMKNFTLNFGPQHPAAHGVLRLIVELESENVVRVEPHIGLLHRGTEKLIEGKTYTQALPYFDRLDYVSMNVQEHAYSLAVERLYLDSLDIELEIPQRAKVIRVLFSEITRVLNHIMATTTHAMDVGALTPFLWAFEEREKLMEFYERVSGARMHAAYIRPGGVAFDLPMNISEDIYKFVIQYRKRLEEIEDMLINNRIWKQRLVDIGIVSAEEALNYGFTGPLLRGAGIVYDIRKNYPYDDYDKYDFKIIIGEENNSYTRFIIRMKEMYQSLAIIEQALNNLRPGLIKLEGVNITAPDRAFVKKDMESCINHFKFFSEGFIIPANENYTIVEAPKGEFGIYLNANDTAKPYRCRIKAPGFLHLQGLNMMSKDHLLADVVTLIGTQDIVFGEVDR.

The protein belongs to the complex I 49 kDa subunit family. In terms of assembly, complex I is composed of 45 different subunits. Component of the iron-sulfur (IP) fragment of the enzyme.

The protein resides in the mitochondrion inner membrane. The catalysed reaction is a ubiquinone + NADH + 5 H(+)(in) = a ubiquinol + NAD(+) + 4 H(+)(out). In terms of biological role, core subunit of the mitochondrial membrane respiratory chain NADH dehydrogenase (Complex I) that is believed to belong to the minimal assembly required for catalysis. Complex I functions in the transfer of electrons from NADH to the respiratory chain. The immediate electron acceptor for the enzyme is believed to be ubiquinone. This Dictyostelium citrinum (Slime mold) protein is NADH-ubiquinone oxidoreductase 49 kDa subunit (nad7).